Here is a 126-residue protein sequence, read N- to C-terminus: UPF0102 protein gll3754 (126 aa).

The protein belongs to the UPF0102 family.

This Gloeobacter violaceus (strain ATCC 29082 / PCC 7421) protein is UPF0102 protein gll3754.